Reading from the N-terminus, the 342-residue chain is MSAWTHRHILDLSTFSREDYAAVLELAHRFSAMPVTGARRLPALQGRLVATLFFEPSTRTRSSFELAAKRLSADVSSFSPSSSSLSKGESLLDTARTYVAMGADVLVVRHRCTGVPRQLAEALERTGERTVVLNGGDGLHSHPSQGLLDLYTLAQHFNPSHPLPEALRGRRIVIVGDVLHSRVARSNLWALTACGADVILCGPPSLVPEAFAQFVAQPPPGQASDPVADRGALTVVRNLDDALAGADAVMTLRLQKERMRQHMLTSLDRYHRDFGLSHERLQVCQVPIPVLHPGPVNRGVEMSGALLDDLSANRVEDQVRNGIPIRMALLYLMAAAESPLSL.

Carbamoyl phosphate contacts are provided by Arg59 and Thr60. Residue Lys87 participates in L-aspartate binding. The carbamoyl phosphate site is built by Arg109, His142, and Gln145. The L-aspartate site is built by Arg182 and Arg253. Gly294 and Pro295 together coordinate carbamoyl phosphate.

It belongs to the aspartate/ornithine carbamoyltransferase superfamily. ATCase family. Heterododecamer (2C3:3R2) of six catalytic PyrB chains organized as two trimers (C3), and six regulatory PyrI chains organized as three dimers (R2).

It catalyses the reaction carbamoyl phosphate + L-aspartate = N-carbamoyl-L-aspartate + phosphate + H(+). It functions in the pathway pyrimidine metabolism; UMP biosynthesis via de novo pathway; (S)-dihydroorotate from bicarbonate: step 2/3. Functionally, catalyzes the condensation of carbamoyl phosphate and aspartate to form carbamoyl aspartate and inorganic phosphate, the committed step in the de novo pyrimidine nucleotide biosynthesis pathway. This Synechococcus sp. (strain WH7803) protein is Aspartate carbamoyltransferase catalytic subunit.